The chain runs to 327 residues: Phenylalanine--tRNA ligase alpha subunit (327 aa).

Residue glutamate 252 participates in Mg(2+) binding.

This sequence belongs to the class-II aminoacyl-tRNA synthetase family. Phe-tRNA synthetase alpha subunit type 1 subfamily. In terms of assembly, tetramer of two alpha and two beta subunits. The cofactor is Mg(2+).

It is found in the cytoplasm. The catalysed reaction is tRNA(Phe) + L-phenylalanine + ATP = L-phenylalanyl-tRNA(Phe) + AMP + diphosphate + H(+). This is Phenylalanine--tRNA ligase alpha subunit from Vibrio campbellii (strain ATCC BAA-1116).